Here is a 295-residue protein sequence, read N- to C-terminus: Epidermal growth factor-like protein 8 (295 aa).

A signal peptide spans 1–25; sequence MGSRAELHTLLGGLSFLLLLMSGQG. The EMI domain maps to 34 to 112; that stretch reads SQGVCSRQTL…RHPGALTCDE (79 aa). Intrachain disulfides connect C38/C97, C65/C71, C96/C110, C115/C125, C119/C131, C133/C142, C149/C160, C156/C169, and C171/C184. N50 carries an N-linked (GlcNAc...) asparagine glycan. The 33-residue stretch at 111-143 folds into the EGF-like 1 domain; that stretch reads DEAICAKPCQNGGVCVRPDQCECAPGWGGRHCH. Positions 145 to 185 constitute an EGF-like 2; calcium-binding domain; that stretch reads DVDECRTGVTLCSHRCHNTAGSFTCGCPHGLVLGPDGRTCA. Residues 202–233 are a coiled coil; the sequence is VREAGREDRALRREIRELRGRLERLEQWAGQA.

It localises to the secreted. This chain is Epidermal growth factor-like protein 8 (EGFL8), found in Sus scrofa (Pig).